The following is a 529-amino-acid chain: Heat shock factor protein 1 (529 aa).

Met1 carries the N-acetylmethionine modification. The interval 15-120 (VPAFLTKLWT…LLENIKRKVT (106 aa)) is DNA-binding domain. Lys80 is modified (N6-acetyllysine). Lys91 is subject to N6-acetyllysine; alternate. Residue Lys91 forms a Glycyl lysine isopeptide (Lys-Gly) (interchain with G-Cter in SUMO2); alternate linkage. Lys118 carries the post-translational modification N6-acetyllysine. Ser121 is modified (phosphoserine; by MAPKAPK2). Glycyl lysine isopeptide (Lys-Gly) (interchain with G-Cter in SUMO2) cross-links involve residues Lys126 and Lys131. The segment at 130-203 (IKIRQDSVTK…ISLVQSNRIL (74 aa)) is hydrophobic repeat HR-A/B. Residue Thr142 is modified to Phosphothreonine; by CK2. An N6-acetyllysine mark is found at Lys150 and Lys188. A d domain region spans residues 203-224 (LGVKRKIPLMLNDSGSAHSMPK). Lys208 carries the post-translational modification N6-acetyllysine; alternate. Lys208 is covalently cross-linked (Glycyl lysine isopeptide (Lys-Gly) (interchain with G-Cter in SUMO2); alternate). Ser216 carries the post-translational modification Phosphoserine; by PLK1. Positions 221–310 (SMPKYSRQFS…PPSPPQSPRV (90 aa)) are regulatory domain. Residue Lys224 forms a Glycyl lysine isopeptide (Lys-Gly) (interchain with G-Cter in SUMO2) linkage. The residue at position 230 (Ser230) is a Phosphoserine; by CAMK2A. 2 positions are modified to phosphoserine: Ser275 and Ser292. The segment at 295–324 (VRVKEEPPSPPQSPRVEEASPGRPSSVDTL) is disordered. At Lys298 the chain carries N6-acetyllysine; alternate. Lys298 is covalently cross-linked (Glycyl lysine isopeptide (Lys-Gly) (interchain with G-Cter in SUMO2); alternate). A Glycyl lysine isopeptide (Lys-Gly) (interchain with G-Cter in SUMO); alternate cross-link involves residue Lys298. Phosphoserine; by GSK3-beta is present on Ser303. Ser307 carries the post-translational modification Phosphoserine; by MAPK3. Residues Ser314 and Ser319 each carry the phosphoserine modification. Phosphoserine; by PKA is present on Ser320. At Thr323 the chain carries Phosphothreonine. At Ser326 the chain carries Phosphoserine; by MAPK12. Positions 336–372 (RESEPAPASVTALTDARGHTDTEGRPPSPPPTSTPEK) are disordered. The residue at position 344 (Ser344) is a Phosphoserine. Ser363 carries the post-translational modification Phosphoserine; by MAPK8. Residues 371–529 (EKCLSVACLD…PPKAKDPTVS (159 aa)) form a transactivation domain region. The segment at 384 to 409 (LSDHLDAMDSNLDNLQTMLSSHGFSV) is hydrophobic repeat HR-C. Residues 412–420 (SALLDLFSP) carry the 9aaTAD motif. Position 419 is a phosphoserine; by PLK1 (Ser419). Ser444 carries the phosphoserine modification. 2 disordered regions span residues 444–463 (SPQE…DSGK) and 502–529 (EGDG…PTVS). Lys524 carries the post-translational modification N6-acetyllysine.

It belongs to the HSF family. In terms of assembly, monomer; cytoplasmic latent and transcriptionally inactive monomeric form in unstressed cells. Homotrimer; in response to stress, such as heat shock, homotrimerizes and translocates into the nucleus, binds to heat shock element (HSE) sequences in promoter of heat shock protein (HSP) genes and acquires transcriptional ability. Interacts (via monomeric form) with FKBP4; this interaction occurs in unstressed cells. Associates (via monomeric form) with HSP90 proteins in a multichaperone complex in unnstressed cell; this association maintains HSF1 in a non-DNA-binding and transcriptional inactive form by preventing HSF1 homotrimerization. Homotrimeric transactivation activity is modulated by protein-protein interactions and post-translational modifications. Interacts with HSP90AA1; this interaction is decreased in a IER5-dependent manner, promoting HSF1 accumulation in the nucleus, homotrimerization and DNA-binding activities. Part (via regulatory domain in the homotrimeric form) of a large heat shock-induced HSP90-dependent multichaperone complex at least composed of FKBP4, FKBP5, HSP90 proteins, PPID, PPP5C and PTGES3; this association maintains the HSF1 homotrimeric DNA-bound form in a transcriptionally inactive form. Interacts with BAG3 (via BAG domain); this interaction occurs in normal and heat-shocked cells promoting nuclear shuttling of HSF1 in a BAG3-dependent manner. Interacts (via homotrimeric and hyperphosphorylated form) with FKBP4; this interaction occurs upon heat shock in a HSP90-dependent multichaperone complex. Interacts (via homotrimeric form preferentially) with EEF1A proteins. In heat shocked cells, stress-denatured proteins compete with HSF1 homotrimeric DNA-bound form for association of the HSP90-dependent multichaperone complex, and hence alleviating repression of HSF1-mediated transcriptional activity. Interacts (via homotrimeric form preferentially) with DAXX; this interaction relieves homotrimeric HSF1 from repression of its transcriptional activity by HSP90-dependent multichaperone complex upon heat shock. Interacts (via D domain and preferentially with hyperphosphorylated form) with JNK1; this interaction occurs under both normal growth conditions and immediately upon heat shock. Interacts (via D domain and preferentially with hyperphosphorylated form) with MAPK3; this interaction occurs upon heat shock. Interacts with IER5 (via central region); this interaction promotes PPP2CA-induced dephosphorylation on Ser-121, Ser-307, Ser-314, Thr-323 and Thr-367 and HSF1 transactivation activity. Found in a ribonucleoprotein complex composed of the HSF1 homotrimeric form, translation elongation factor eEF1A proteins and non-coding RNA heat shock RNA-1 (HSR1); this complex occurs upon heat shock and stimulates HSF1 DNA-binding activity. Interacts (via transactivation domain) with HSPA1A/HSP70 and DNAJB1; these interactions result in the inhibition of heat shock- and HSF1-induced transcriptional activity during the attenuation and recovery phase from heat shock. Interacts (via Ser-303 and Ser-307 phosphorylated form) with YWHAE; this interaction promotes HSF1 sequestration in the cytoplasm in an ERK-dependent manner. Found in a complex with IER5 and PPP2CA. Interacts with TPR; this interaction increases upon heat shock and stimulates export of HSP70 mRNA. Interacts with SYMPK (via N-terminus) and CSTF2; these interactions occur upon heat shock. Interacts (via transactivation domain) with HSPA8. Interacts with EEF1D; this interaction occurs at heat shock promoter element (HSE) sequences. Interacts with MAPKAPK2. Interacts with PRKACA/PKA. Interacts (via transactivation domain) with GTF2A2. Interacts (via transactivation domain) with GTF2B. Interacts (via transactivation domain) with TBP. Interacts with CDK9, CCNT1 and EP300. Interacts (via N-terminus) with XRCC5 (via N-terminus) and XRCC6 (via N-terminus); these interactions are direct and prevent XRCC5/XRCC6 heterodimeric binding and non-homologous end joining (NHEJ) repair activities induced by ionizing radiation (IR). Interacts with PLK1; this interaction occurs during the early mitotic period, increases upon heat shock but does not modulate neither HSF1 homotrimerization and DNA-binding activities. Interacts (via Ser-216 phosphorylated form) with CDC20; this interaction occurs in mitosis in a MAD2L1-dependent manner and prevents PLK1-stimulated degradation of HSF1 by blocking the recruitment of the SCF(BTRC) ubiquitin ligase complex. Interacts with MAD2L1; this interaction occurs in mitosis. Interacts with BTRC; this interaction occurs during mitosis, induces its ubiquitin-dependent degradation following stimulus-dependent phosphorylation at Ser-216, a process inhibited by CDC20. Interacts with HSP90AA1 and HSP90AB1. Forms a complex with TTC5/STRAP and p300/EP300; these interactions augment chromatin-bound HSF1 and p300/EP300 histone acetyltransferase activity. Phosphorylated. Phosphorylated in unstressed cells; this phosphorylation is constitutive and implicated in the repression of HSF1 transcriptional activity. Phosphorylated on Ser-121 by MAPKAPK2; this phosphorylation promotes interaction with HSP90 proteins and inhibits HSF1 homotrimerization, DNA-binding and transactivation activities. Phosphorylation on Ser-303 by GSK3B/GSK3-beta and on Ser-307 by MAPK3 within the regulatory domain is involved in the repression of HSF1 transcriptional activity and occurs in a RAF1-dependent manner. Phosphorylation on Ser-303 and Ser-307 increases HSF1 nuclear export in a YWHAE- and XPO1/CRM1-dependent manner. Phosphorylation on Ser-307 is a prerequisite for phosphorylation on Ser-303. According to PubMed:9535852, Ser-303 is not phosphorylated in unstressed cells. Phosphorylated on Ser-419 by PLK1; phosphorylation promotes nuclear translocation upon heat shock. Hyperphosphorylated upon heat shock and during the attenuation and recovery phase period of the heat shock response. Phosphorylated on Thr-142; this phosphorylation increases HSF1 transactivation activity upon heat shock. Phosphorylation on Ser-230 by CAMK2A; this phosphorylation enhances HSF1 transactivation activity upon heat shock. Phosphorylation on Ser-326 by MAPK12; this phosphorylation enhances HSF1 nuclear translocation, homotrimerization and transactivation activities upon heat shock. Phosphorylated on Ser-320 by PRKACA/PKA; this phosphorylation promotes nuclear localization and transcriptional activity upon heat shock. Phosphorylated on Ser-363 by MAPK8; this phosphorylation occurs upon heat shock, induces HSF1 translocation into nuclear stress bodies and negatively regulates transactivation activity. Neither basal nor stress-inducible phosphorylation on Ser-230, Ser-292, Ser-303, Ser-307, Ser-314, Ser-319, Ser-320, Thr-323, Ser-326, Ser-338, Ser-344, Ser-363, Thr-367, Ser-368 and Thr-369 within the regulatory domain is involved in the regulation of HSF1 subcellular localization or DNA-binding activity; however, it negatively regulates HSF1 transactivation activity. Phosphorylated on Ser-216 by PLK1 in the early mitotic period; this phosphorylation regulates HSF1 localization to the spindle pole, the recruitment of the SCF(BTRC) ubiquitin ligase complex inducing HSF1 degradation, and hence mitotic progression. Dephosphorylated on Ser-121, Ser-307, Ser-314, Thr-323 and Thr-367 by phosphatase PPP2CA in an IER5-dependent manner, leading to HSF1-mediated transactivation activity. In terms of processing, sumoylated with SUMO1 and SUMO2 upon heat shock in a ERK2-dependent manner. Sumoylated by SUMO1 on Lys-298; sumoylation occurs upon heat shock and promotes its localization to nuclear stress bodies and DNA-binding activity. Phosphorylation on Ser-303 and Ser-307 is probably a prerequisite for sumoylation. Post-translationally, acetylated on Lys-118; this acetylation is decreased in a IER5-dependent manner. Acetylated on Lys-118, Lys-208 and Lys-298; these acetylations occur in a EP300-dependent manner. Acetylated on Lys-80; this acetylation inhibits DNA-binding activity upon heat shock. Deacetylated on Lys-80 by SIRT1; this deacetylation increases DNA-binding activity. Ubiquitinated by SCF(BTRC) and degraded following stimulus-dependent phosphorylation at Ser-216 by PLK1 in mitosis. Polyubiquitinated. Undergoes proteasomal degradation upon heat shock and during the attenuation and recovery phase period of the heat shock response.

Its subcellular location is the nucleus. The protein resides in the cytoplasm. It is found in the nucleoplasm. It localises to the perinuclear region. The protein localises to the cytoskeleton. Its subcellular location is the spindle pole. The protein resides in the microtubule organizing center. It is found in the centrosome. It localises to the chromosome. The protein localises to the centromere. Its subcellular location is the kinetochore. Functions as a stress-inducible and DNA-binding transcription factor that plays a central role in the transcriptional activation of the heat shock response (HSR), leading to the expression of a large class of molecular chaperones, heat shock proteins (HSPs), that protect cells from cellular insult damage. In unstressed cells, is present in a HSP90-containing multichaperone complex that maintains it in a non-DNA-binding inactivated monomeric form. Upon exposure to heat and other stress stimuli, undergoes homotrimerization and activates HSP gene transcription through binding to site-specific heat shock elements (HSEs) present in the promoter regions of HSP genes. Upon heat shock stress, forms a chromatin-associated complex with TTC5/STRAP and p300/EP300 to stimulate HSR transcription, therefore increasing cell survival. Activation is reversible, and during the attenuation and recovery phase period of the HSR, returns to its unactivated form. Binds to inverted 5'-NGAAN-3' pentamer DNA sequences. Binds to chromatin at heat shock gene promoters. Activates transcription of transcription factor FOXR1 which in turn activates transcription of the heat shock chaperones HSPA1A and HSPA6 and the antioxidant NADPH-dependent reductase DHRS2. Also serves several other functions independently of its transcriptional activity. Involved in the repression of Ras-induced transcriptional activation of the c-fos gene in heat-stressed cells. Positively regulates pre-mRNA 3'-end processing and polyadenylation of HSP70 mRNA upon heat-stressed cells in a symplekin (SYMPK)-dependent manner. Plays a role in nuclear export of stress-induced HSP70 mRNA. Plays a role in the regulation of mitotic progression. Also plays a role as a negative regulator of non-homologous end joining (NHEJ) repair activity in a DNA damage-dependent manner. Involved in stress-induced cancer cell proliferation in a IER5-dependent manner. In terms of biological role, (Microbial infection) Plays a role in latent human immunodeficiency virus (HIV-1) transcriptional reactivation. Binds to the HIV-1 long terminal repeat promoter (LTR) to reactivate viral transcription by recruiting cellular transcriptional elongation factors, such as CDK9, CCNT1 and EP300. The chain is Heat shock factor protein 1 from Homo sapiens (Human).